Here is a 110-residue protein sequence, read N- to C-terminus: Protein YcgL (110 aa).

The YcgL domain maps to 14-98 (MFCVIYRSSK…PPEDLLKQHL (85 aa)). The interval 88–110 (PPPEDLLKQHLSSVGQNTSHADR) is disordered. Polar residues predominate over residues 97-110 (HLSSVGQNTSHADR).

The polypeptide is Protein YcgL (Salmonella schwarzengrund (strain CVM19633)).